The sequence spans 134 residues: Fatty acid-binding protein, muscle (134 aa).

(9Z)-octadecenoate contacts are provided by residues arginine 109 and 129–131 (RIY).

Belongs to the calycin superfamily. Fatty-acid binding protein (FABP) family. As to quaternary structure, monomer. Adult flight muscle.

The protein localises to the cytoplasm. In terms of biological role, binds fatty acids in a 1:1 molar ratio. This Schistocerca gregaria (Desert locust) protein is Fatty acid-binding protein, muscle.